The following is a 1026-amino-acid chain: MQHNVHAARPAPHIRAAHHHSHSHAHMHLHPGMEQHLGPSLQQQQQPPPPPQQPPHRDLHARLNHHHLHAQQQQQQQTSSNQAGAVAAAGAAYHHGNINSNSGSNISSNSNQMQKIRQQHQHLSSSNGLLGNQPPGPPPQAFNPLAGNPAALAYNQLPPHPPHHMAAHLGSYAAPPPHYYMSQAKPAKYNHYGSNANSNSGSNNSNSNYAPKAILQNTYRNQKVVVPPVVQEVTPVPEPPVTTNNATTNSTSNSTVIASEPVTQEDTSQKPETRQEPASADDHVSTGNIDATGALSNEDTSSSGRGGKDKTPMCLVNELARYNKITHQYRLTEERGPAHCKTFTVTLMLGDEEYSADGFKIKKAQHLAASKAIEETMYKHPPPKIRRSEEGGPMRTHITPTVELNALAMKLGQRTFYLLDPTQIPPTDSIVPPEFAGGHLLTAPGPGMPQPPPPPAYALRQRLGNGFVPIPSQPMHPHFFHGPGQRPFPPKFPSRFALPPPLGAHVHHGPNGPFPSVPTPPSKITLFVGKQKFVGIGRTLQQAKHDAAARALQVLKTQAISASEEALEDSMDEGDKKSPISQVHEIGIKRNMTVHFKVLREEGPAHMKNFITACIVGSIVTEGEGNGKKVSKKRAAEKMLVELQKLPPLTPTKQTPLKRIKVKTPGKSGAAAREGSVVSGTDGPTQTGKPERRKRLNPPKDKLIDMDDADNPITKLIQLQQTRKEKEPIFELIAKNGNETARRREFVMEVSASGSTARGTGNSKKLAKRNAAQALFELLEAVQVTPTNETQSSEECSTSATMSAVTAPAVEATAEGKVPMVATPVGPMPGILILRQNKKPAKKRDQIVIVKSNVESKEEEANKEVAVAAEENSNNSANSGDSSNSSSGDSQATEAASESALNTSTGSNTSGVSSNSSNVGANTDGNNHAESKNNTESSSNSTSNTQSAGVHMKEQLLYLSKLLDFEVNFSDYPKGNHNEFLTIVTLSTHPPQICHGVGKSSEESQNDAASNALKILSKLGLNNAMK.

Over residues A16–L29 the composition is skewed to basic residues. 3 disordered regions span residues A16 to P159, N190 to A210, and T234 to T311. A compositionally biased stretch (low complexity) spans A70–N111. The segment covering Q112–S126 has biased composition (polar residues). Low complexity-rich tracts occupy residues Y192–A210 and T234–V256. Basic and acidic residues predominate over residues T267–V284. The span at S285–S303 shows a compositional bias: polar residues. 2 consecutive DRBM domains span residues T311 to Y378 and P490 to T557. Phosphoserine occurs at positions 563 and 570. The region spanning S578 to K645 is the DRBM 3 domain. Residues H606, K608, K628, K629, and K632 each contribute to the RNA site. Positions P647–D707 are disordered. A phosphothreonine mark is found at T650 and T655. Position 676 is a phosphoserine (S676). Positions V678–G688 are enriched in polar residues. Positions N711 to A781 constitute a DRBM 4 domain. The segment at E855–A948 is disordered. The span at E864–S890 shows a compositional bias: low complexity. Positions Q891–L901 are enriched in polar residues. Composition is skewed to low complexity over residues N902–G920 and N934–S947. One can recognise a DRBM 5 domain in the interval H951–K1018.

In terms of assembly, component of neuronal ribonucleoprotein complexes (RNPs) that contains at least various translational repressor and mRNA turnover proteins such as me31B, tral, Upf1, AGO2 and sometimes Fmr1. As to expression, polar granules at the posterior pole of the oocyte, and by the time the egg is laid, at the anterior pole.

Its subcellular location is the cytoplasm. It localises to the cytoplasmic ribonucleoprotein granule. Functionally, RNA-binding protein which forms ribonucleoprotein complexes (RNPs) that play critical roles in the localization, translational repression and turnover of RNAs during embryogenesis, neurotransmission and neurogenesis. In the oocyte, essential for the localization of both the osk/oskar mRNA to the posterior pole and bcd/bicoid RNA to the anterior pole, and is therefore required for the correct anterior-posterior patterning of the developing embryo. Association with osk or bcd at their respective poles, appears to promote the formation and stabilization of the ribonucleoprotein complexes. Integral component of diverse neuritic ribonucleoprotein complexes (RNPs) that mediate the transport, translation and turnover of neuronal RNAs during neuorgenesis and the translation repression of synaptic transcripts in preparation for their dendritic targeting. This is Maternal effect protein staufen (stau) from Drosophila melanogaster (Fruit fly).